Reading from the N-terminus, the 144-residue chain is Small ribosomal subunit protein uS19 (144 aa).

This sequence belongs to the universal ribosomal protein uS19 family.

Its function is as follows. Protein S19 forms a complex with S13 that binds strongly to the 16S ribosomal RNA. This is Small ribosomal subunit protein uS19 from Hyperthermus butylicus (strain DSM 5456 / JCM 9403 / PLM1-5).